The following is a 2531-amino-acid chain: Talin (2531 aa).

Residues 87–401 (RPLRVRMMDE…GYIDIILKKK (315 aa)) form the FERM domain. Positions 598–621 (GEKLLEAARGLAGAVRHLLKSAEP) are interaction with VIN1. In terms of domain architecture, I/LWEQ spans 2287 to 2526 (TDWVDPSDPN…KIRHDKYKRH (240 aa)). The interval 2466-2485 (AAKRSSEEGDDEEVSGGGQE) is disordered.

Interacts with VIN1 (vinculin); the interaction facilitates VIN1 binding to F-actin.

The protein localises to the cytoplasm. It localises to the cytoskeleton. Its subcellular location is the cell cortex. Functionally, probably involved in connections of major cytoskeletal structures to the plasma membrane. The sequence is that of Talin from Oscarella pearsei (Sponge).